Reading from the N-terminus, the 222-residue chain is Niacin transporter NiaX (222 aa).

5 consecutive transmembrane segments (helical) span residues Asn-34 to Val-54, Met-72 to Met-94, Thr-101 to Leu-120, Ile-135 to Phe-155, and Ala-167 to Phe-187.

The protein belongs to the vitamin uptake transporter (VUT/ECF) (TC 2.A.88) family. In L.lactis forms a stable complex with EcfA, EcfA' and EcfT. In E.coli forms a stable energy-coupling factor (ECF) transporter complex composed of 2 membrane-embedded substrate-binding proteins (S component), 2 ATP-binding proteins (A and A' components) and 2 transmembrane proteins (T component), probably with a stoichiometry of 2:1:1:2. May be able to interact with more than 1 S component at a time.

The protein resides in the cell membrane. Its function is as follows. Probably a niacin-binding protein that interacts with the energy-coupling factor (ECF) ABC-transporter complex. Unlike classic ABC transporters this ECF transporter provides the energy necessary to transport a number of different substrates. The substrates themselves are bound by transmembrane, not extracytoplasmic soluble proteins. Uptake of niacin into proteosomes containing EcfA1A2T and Niax has been demonstrated. Uptake requires hydrolyzable Mg-ATP and is substrate-specific; NiaX-containing proteosomes did not transport riboflavin. This Lactococcus lactis subsp. cremoris (strain MG1363) protein is Niacin transporter NiaX (niaX).